The sequence spans 143 residues: Nucleoside diphosphate kinase (143 aa).

The ATP site is built by Lys-11, Phe-59, Arg-87, Thr-93, Arg-104, and Asn-114. The Pros-phosphohistidine intermediate role is filled by His-117.

It belongs to the NDK family. Homotetramer. Requires Mg(2+) as cofactor.

It is found in the cytoplasm. It catalyses the reaction a 2'-deoxyribonucleoside 5'-diphosphate + ATP = a 2'-deoxyribonucleoside 5'-triphosphate + ADP. It carries out the reaction a ribonucleoside 5'-diphosphate + ATP = a ribonucleoside 5'-triphosphate + ADP. Its function is as follows. Major role in the synthesis of nucleoside triphosphates other than ATP. The ATP gamma phosphate is transferred to the NDP beta phosphate via a ping-pong mechanism, using a phosphorylated active-site intermediate. This chain is Nucleoside diphosphate kinase, found in Shewanella loihica (strain ATCC BAA-1088 / PV-4).